The sequence spans 255 residues: Acetylglutamate kinase (255 aa).

Substrate is bound by residues 40–41 (GG), Arg62, and Asn153.

The protein belongs to the acetylglutamate kinase family. ArgB subfamily.

The protein resides in the cytoplasm. It carries out the reaction N-acetyl-L-glutamate + ATP = N-acetyl-L-glutamyl 5-phosphate + ADP. The protein operates within amino-acid biosynthesis; L-arginine biosynthesis; N(2)-acetyl-L-ornithine from L-glutamate: step 2/4. Functionally, catalyzes the ATP-dependent phosphorylation of N-acetyl-L-glutamate. The protein is Acetylglutamate kinase of Bacillus cereus (strain B4264).